The following is a 738-amino-acid chain: Elongation factor G, mitochondrial (738 aa).

The segment at 1 to 20 is disordered; the sequence is MCIGPAPTPETEEELPPSPQ. The 289-residue stretch at 32–320 folds into the tr-type G domain; it reads RFQRNIGVSA…GVCAYLPNPA (289 aa). GTP is bound by residues 41-48, 118-122, and 172-175; these read AHIDSGKT, DTPGH, and NKMD.

Belongs to the TRAFAC class translation factor GTPase superfamily. Classic translation factor GTPase family. EF-G/EF-2 subfamily.

The protein localises to the mitochondrion. The protein operates within protein biosynthesis; polypeptide chain elongation. Functionally, mitochondrial GTPase that catalyzes the GTP-dependent ribosomal translocation step during translation elongation. During this step, the ribosome changes from the pre-translocational (PRE) to the post-translocational (POST) state as the newly formed A-site-bound peptidyl-tRNA and P-site-bound deacylated tRNA move to the P and E sites, respectively. Catalyzes the coordinated movement of the two tRNA molecules, the mRNA and conformational changes in the ribosome. The polypeptide is Elongation factor G, mitochondrial (Laccaria bicolor (strain S238N-H82 / ATCC MYA-4686) (Bicoloured deceiver)).